The chain runs to 269 residues: Integral membrane protein 2C (269 aa).

Thr39 carries the phosphothreonine modification. The chain crosses the membrane as a helical; Signal-anchor for type II membrane protein span at residues Val57–Ala77. Residues Phe138–Leu232 enclose the BRICHOS domain. A disulfide bridge links Cys165 with Cys224. Residue Asn171 is glycosylated (N-linked (GlcNAc...) asparagine).

Belongs to the ITM2 family. Interacts with BACE1. Interacts with APP. Interacts with STMN2. Type I membrane-bound, as well as soluble, furin has a pre-eminent role in ITM2C proteolytic processing. PCSK7 and PCSK5 may also be involved although to a lesser extent. The soluble form of PCSK7 is incapable of processing ITM2C. Fails to undergo shedding by ADAM10 and intramembrane cleavage by SPPL2B.

Its subcellular location is the lysosome membrane. It is found in the cell membrane. Its function is as follows. Negative regulator of amyloid-beta peptide production. May inhibit the processing of APP by blocking its access to alpha- and beta-secretase. Binding to the beta-secretase-cleaved APP C-terminal fragment is negligible, suggesting that ITM2C is a poor gamma-secretase cleavage inhibitor. May play a role in TNF-induced cell death and neuronal differentiation. This chain is Integral membrane protein 2C (Itm2c), found in Rattus norvegicus (Rat).